Here is a 507-residue protein sequence, read N- to C-terminus: Proline--tRNA ligase (507 aa).

Belongs to the class-II aminoacyl-tRNA synthetase family. ProS type 3 subfamily. As to quaternary structure, homodimer.

The protein localises to the cytoplasm. The enzyme catalyses tRNA(Pro) + L-proline + ATP = L-prolyl-tRNA(Pro) + AMP + diphosphate. Its function is as follows. Catalyzes the attachment of proline to tRNA(Pro) in a two-step reaction: proline is first activated by ATP to form Pro-AMP and then transferred to the acceptor end of tRNA(Pro). This Protochlamydia amoebophila (strain UWE25) protein is Proline--tRNA ligase.